Consider the following 245-residue polypeptide: GDSL esterase/lipase At4g16220 (245 aa).

Residues 1 to 24 (MSSLVSRCQVIALLVLFFFGVCLA) form the signal peptide. Ser37 acts as the Nucleophile in catalysis.

It belongs to the 'GDSL' lipolytic enzyme family.

The protein resides in the secreted. This Arabidopsis thaliana (Mouse-ear cress) protein is GDSL esterase/lipase At4g16220.